Here is a 232-residue protein sequence, read N- to C-terminus: Chaperone protein CssC (232 aa).

Positions 1 to 20 are cleaved as a signal peptide; it reads MKSKLIILLTLVPFSSFSTG.

The protein belongs to the periplasmic pilus chaperone family.

Its subcellular location is the periplasm. Functionally, involved in the biogenesis of the CS6 fimbria. The protein is Chaperone protein CssC (cssC) of Escherichia coli.